A 325-amino-acid chain; its full sequence is Intelectin-2 (325 aa).

A signal peptide spans 1–26; sequence MLSMLRTMTRLCFLLFFSVATSGCSA. A Fibrinogen C-terminal domain is found at 44 to 267; sequence FSFSSLPRSC…AANALCAGIK (224 aa). A disulfide bond links Cys53 and Cys82. Positions 98, 99, 101, 104, 109, 110, and 145 each coordinate Ca(2+). 3 cysteine pairs are disulfide-bonded: Cys106–Cys292, Cys211–Cys271, and Cys263–Cys277. The Ca(2+) site is built by Asn272, Glu274, and Asp294. Residue 274–275 participates in a carbohydrate binding; the sequence is EH.

In terms of tissue distribution, expressed only in the small intestine.

It localises to the secreted. In terms of biological role, may play a role in the defense system against pathogens. The sequence is that of Intelectin-2 (ITLN2) from Homo sapiens (Human).